The sequence spans 273 residues: Nitrogenase iron protein 4 (273 aa).

ATP is bound at residue 8-15; that stretch reads GKGGIGKS. Position 94 (Cys-94) interacts with [4Fe-4S] cluster. An ADP-ribosylarginine; by dinitrogenase reductase ADP-ribosyltransferase modification is found at Arg-97. Position 129 (Cys-129) interacts with [4Fe-4S] cluster.

Belongs to the NifH/BchL/ChlL family. In terms of assembly, homodimer. [4Fe-4S] cluster serves as cofactor. In terms of processing, the reversible ADP-ribosylation of Arg-97 inactivates the nitrogenase reductase and regulates nitrogenase activity.

The enzyme catalyses N2 + 8 reduced [2Fe-2S]-[ferredoxin] + 16 ATP + 16 H2O = H2 + 8 oxidized [2Fe-2S]-[ferredoxin] + 2 NH4(+) + 16 ADP + 16 phosphate + 6 H(+). Its function is as follows. The key enzymatic reactions in nitrogen fixation are catalyzed by the nitrogenase complex, which has 2 components: the iron protein and the molybdenum-iron protein. The chain is Nitrogenase iron protein 4 (nifH4) from Clostridium pasteurianum.